We begin with the raw amino-acid sequence, 215 residues long: Elongation factor Ts (215 aa).

The involved in Mg(2+) ion dislocation from EF-Tu stretch occupies residues 80–83 (TDFA).

It belongs to the EF-Ts family.

The protein resides in the cytoplasm. Functionally, associates with the EF-Tu.GDP complex and induces the exchange of GDP to GTP. It remains bound to the aminoacyl-tRNA.EF-Tu.GTP complex up to the GTP hydrolysis stage on the ribosome. The chain is Elongation factor Ts from Acetivibrio thermocellus (strain ATCC 27405 / DSM 1237 / JCM 9322 / NBRC 103400 / NCIMB 10682 / NRRL B-4536 / VPI 7372) (Clostridium thermocellum).